A 479-amino-acid chain; its full sequence is UDP-N-acetylmuramoyl-L-alanyl-D-glutamate--2,6-diaminopimelate ligase (479 aa).

Ser21 contributes to the UDP-N-acetyl-alpha-D-muramoyl-L-alanyl-D-glutamate binding site. 98–104 (GTNGKSS) is a binding site for ATP. UDP-N-acetyl-alpha-D-muramoyl-L-alanyl-D-glutamate is bound by residues 144–145 (TT), Ser171, Gln177, and Arg179. Lys211 bears the N6-carboxylysine mark. Residues Arg372, 396-399 (DNPR), Gly446, and Glu450 contribute to the meso-2,6-diaminopimelate site. Residues 396-399 (DNPR) carry the Meso-diaminopimelate recognition motif motif.

It belongs to the MurCDEF family. MurE subfamily. Mg(2+) serves as cofactor. Post-translationally, carboxylation is probably crucial for Mg(2+) binding and, consequently, for the gamma-phosphate positioning of ATP.

The protein resides in the cytoplasm. It carries out the reaction UDP-N-acetyl-alpha-D-muramoyl-L-alanyl-D-glutamate + meso-2,6-diaminopimelate + ATP = UDP-N-acetyl-alpha-D-muramoyl-L-alanyl-gamma-D-glutamyl-meso-2,6-diaminopimelate + ADP + phosphate + H(+). The protein operates within cell wall biogenesis; peptidoglycan biosynthesis. Catalyzes the addition of meso-diaminopimelic acid to the nucleotide precursor UDP-N-acetylmuramoyl-L-alanyl-D-glutamate (UMAG) in the biosynthesis of bacterial cell-wall peptidoglycan. The protein is UDP-N-acetylmuramoyl-L-alanyl-D-glutamate--2,6-diaminopimelate ligase of Rickettsia conorii (strain ATCC VR-613 / Malish 7).